The following is a 190-amino-acid chain: NADH-quinone oxidoreductase subunit B (190 aa).

[4Fe-4S] cluster contacts are provided by C69, C70, C134, and C164.

It belongs to the complex I 20 kDa subunit family. In terms of assembly, NDH-1 is composed of 14 different subunits. Subunits NuoB, C, D, E, F, and G constitute the peripheral sector of the complex. Requires [4Fe-4S] cluster as cofactor.

It is found in the cell inner membrane. The catalysed reaction is a quinone + NADH + 5 H(+)(in) = a quinol + NAD(+) + 4 H(+)(out). Its function is as follows. NDH-1 shuttles electrons from NADH, via FMN and iron-sulfur (Fe-S) centers, to quinones in the respiratory chain. Couples the redox reaction to proton translocation (for every two electrons transferred, four hydrogen ions are translocated across the cytoplasmic membrane), and thus conserves the redox energy in a proton gradient. This Hyphomonas neptunium (strain ATCC 15444) protein is NADH-quinone oxidoreductase subunit B.